A 1007-amino-acid chain; its full sequence is Kinesin-like protein KIN-14F (1007 aa).

Residues 41–187 form the Calponin-homology (CH) domain; it reads AARRNEAAGW…CVLALKSYGD (147 aa). The Kinesin motor domain occupies 390–715; the sequence is SIRVYCRVRP…LKFAERVSTV (326 aa). 472–479 is a binding site for ATP; the sequence is GQTGSGKT. Residues 718–748 are a coiled coil; sequence GAARLNKESGEVKELKEQIARLKSSLAMKDS. Over residues 885-904 the composition is skewed to basic and acidic residues; it reads KQYLRNNSRKKDGNEFEQQR. 2 disordered regions span residues 885–924 and 944–1007; these read KQYL…ATSD and SENG…AGTK. Residues 963–1001 are compositionally biased toward polar residues; it reads TRTPLHSQIPSASRKTSNGNRSGRQPLSGSDSRRLSSNG.

The protein belongs to the TRAFAC class myosin-kinesin ATPase superfamily. Kinesin family. KIN-14 subfamily.

This is Kinesin-like protein KIN-14F from Oryza sativa subsp. japonica (Rice).